A 369-amino-acid chain; its full sequence is Porin-like protein BUsg_347 (369 aa).

An N-terminal signal peptide occupies residues 1 to 23 (MKNHKSLAILIPMLFAGSTAVNA).

This sequence belongs to the Gram-negative porin family. As to quaternary structure, homotrimer.

The protein resides in the cell outer membrane. Forms pores that allow passive diffusion of small molecules across the membrane. The sequence is that of Porin-like protein BUsg_347 from Buchnera aphidicola subsp. Schizaphis graminum (strain Sg).